A 512-amino-acid polypeptide reads, in one-letter code: 2,3-bisphosphoglycerate-independent phosphoglycerate mutase (512 aa).

Residues Asp-11 and Ser-61 each contribute to the Mn(2+) site. Residue Ser-61 is the Phosphoserine intermediate of the active site. Residues His-122, 152-153 (RD), Arg-184, Arg-190, 259-262 (RADR), and Lys-332 contribute to the substrate site. 5 residues coordinate Mn(2+): Asp-399, His-403, Asp-440, His-441, and His-459.

The protein belongs to the BPG-independent phosphoglycerate mutase family. In terms of assembly, monomer. Mn(2+) is required as a cofactor.

It catalyses the reaction (2R)-2-phosphoglycerate = (2R)-3-phosphoglycerate. Its pathway is carbohydrate degradation; glycolysis; pyruvate from D-glyceraldehyde 3-phosphate: step 3/5. Functionally, catalyzes the interconversion of 2-phosphoglycerate and 3-phosphoglycerate. This is 2,3-bisphosphoglycerate-independent phosphoglycerate mutase from Francisella tularensis subsp. novicida (strain U112).